The following is a 289-amino-acid chain: Oxaloacetate decarboxylase (289 aa).

Ser-50 is a binding site for substrate. Mg(2+) is bound at residue Asp-88. Substrate is bound by residues Arg-159 and His-235.

The protein belongs to the isocitrate lyase/PEP mutase superfamily. Oxaloacetate decarboxylase family. Homotetramer; dimer of dimers. Requires Mg(2+) as cofactor.

It catalyses the reaction oxaloacetate + H(+) = pyruvate + CO2. In terms of biological role, catalyzes the decarboxylation of oxaloacetate into pyruvate. Seems to play a role in maintaining cellular concentrations of bicarbonate and pyruvate. This chain is Oxaloacetate decarboxylase, found in Pseudomonas putida (strain GB-1).